A 246-amino-acid polypeptide reads, in one-letter code: Non-structural protein ORF4b (246 aa).

Residues 1 to 28 (MEESLMDVPSTSGTQVYSRKARKRSHSP) are disordered. The span at 19 to 28 (RKARKRSHSP) shows a compositional bias: basic residues. The short motif at 22-38 (RKRSHSPTKKLRYVKRR) is the Nuclear localization motif element.

As to quaternary structure, interacts with host KPNA4; this interaction inhibits the nuclear import of NF-kappa-B complex.

Its subcellular location is the host nucleus. The protein localises to the host nucleolus. The protein resides in the host cytoplasm. Its function is as follows. Plays a role in the inhibition of host innate immunity by inhibiting the interaction between host IKBKE and MAVS. In turn, this inhibition prevents the production of host interferon beta. Additionally, inhibits host NF-kappa-B by interacting with host KPNA4 and thereby preventing the translocation of the NF-kappa-B complex into the nucleus by this importin. In Camelus dromedarius (Dromedary), this protein is Non-structural protein ORF4b (ORF4b).